We begin with the raw amino-acid sequence, 73 residues long: Large ribosomal subunit protein bL31 (73 aa).

Belongs to the bacterial ribosomal protein bL31 family. Type A subfamily. As to quaternary structure, part of the 50S ribosomal subunit.

Binds the 23S rRNA. This Rhodospirillum centenum (strain ATCC 51521 / SW) protein is Large ribosomal subunit protein bL31.